The primary structure comprises 1005 residues: Probable histidine kinase 4 (1005 aa).

Residues 1 to 37 (MGVGGGGGGGGGEAAAAVAVEGDEAGKGRRWWRVKVK) lie on the Cytoplasmic side of the membrane. Residues 38-58 (LSTVAVVAWVLASAALWAGLH) form a helical membrane-spanning segment. Residues 59-333 (WRFRRAALHK…YRNKLHVSWS (275 aa)) lie on the Extracellular side of the membrane. The 212-residue stretch at 110-321 (HPPALDQDTF…GDPLRKHQMV (212 aa)) folds into the CHASE domain. The chain crosses the membrane as a helical span at residues 334-354 (AITTPSGVFVICMLVGYIIYA). At 355–1005 (AWSRYDNVKE…QKFLGPCVSS (651 aa)) the chain is on the cytoplasmic side. The Histidine kinase domain occupies 389-675 (TVSHEIRTPM…TFTFTAVLRR (287 aa)). H392 is modified (phosphohistidine; by autocatalysis). 2 Response regulatory domains span residues 700 to 829 (SALL…FQAL) and 862 to 999 (NILV…QKFL). D912 carries the post-translational modification 4-aspartylphosphate.

Activation probably requires a transfer of a phosphate group between a His in the transmitter domain and an Asp of the receiver domain. As to expression, highly expressed in young leaves and spikelets, and at lower levels in roots, mature leaves and stems.

It is found in the cell membrane. It catalyses the reaction ATP + protein L-histidine = ADP + protein N-phospho-L-histidine.. In terms of biological role, cytokinin receptor related to bacterial two-component regulators. Functions as a histidine kinase and transmits the stress signal to a downstream MAPK cascade. The sequence is that of Probable histidine kinase 4 from Oryza sativa subsp. japonica (Rice).